The following is a 166-amino-acid chain: Interferon gamma (166 aa).

The signal sequence occupies residues 1–23 (MKYTSYILAFQLCIVLGSLGCYC). Pyrrolidone carboxylic acid is present on Q24. Residue N48 is glycosylated (N-linked (GlcNAc...) asparagine). N120 carries an N-linked (GlcNAc...) asparagine; in dimeric form glycan. A disordered region spans residues 147 to 166 (AKTGKRKRSQMLFRGRRASQ). A compositionally biased stretch (basic residues) spans 149-166 (TGKRKRSQMLFRGRRASQ). Residues 162–166 (RRASQ) constitute a propeptide that is removed on maturation.

It belongs to the type II (or gamma) interferon family. As to quaternary structure, homodimer. Interacts with IFNGR1 (via extracellular domain); this interaction promotes IFNGR1 dimerization. Post-translationally, proteolytic processing produces C-terminal heterogeneity, with proteins ending alternatively at Gly-150, Met-157 or Gly-161. Released primarily from activated T lymphocytes.

The protein localises to the secreted. Its function is as follows. Type II interferon produced by immune cells such as T-cells and NK cells that plays crucial roles in antimicrobial, antiviral, and antitumor responses by activating effector immune cells and enhancing antigen presentation. Primarily signals through the JAK-STAT pathway after interaction with its receptor IFNGR1 to affect gene regulation. Upon IFNG binding, IFNGR1 intracellular domain opens out to allow association of downstream signaling components JAK2, JAK1 and STAT1, leading to STAT1 activation, nuclear translocation and transcription of IFNG-regulated genes. Many of the induced genes are transcription factors such as IRF1 that are able to further drive regulation of a next wave of transcription. Plays a role in class I antigen presentation pathway by inducing a replacement of catalytic proteasome subunits with immunoproteasome subunits. In turn, increases the quantity, quality, and repertoire of peptides for class I MHC loading. Increases the efficiency of peptide generation also by inducing the expression of activator PA28 that associates with the proteasome and alters its proteolytic cleavage preference. Up-regulates as well MHC II complexes on the cell surface by promoting expression of several key molecules such as cathepsins B/CTSB, H/CTSH, and L/CTSL. Participates in the regulation of hematopoietic stem cells during development and under homeostatic conditions by affecting their development, quiescence, and differentiation. The polypeptide is Interferon gamma (IFNG) (Homo sapiens (Human)).